The following is a 189-amino-acid chain: Adenylate kinase (189 aa).

ATP is bound at residue 10–15 (GAGKGT). Positions 30 to 59 (STGDIFRANVSGGTELGKKAQAYMDRGDLV) are NMP. Residues Thr31, Arg36, 57-59 (DLV), 85-88 (GFPR), and Gln92 contribute to the AMP site. Residues 126-136 (ERARIDNRSDD) form an LID region. An ATP-binding site is contributed by Arg127. AMP contacts are provided by Arg133 and Arg144. Gly172 serves as a coordination point for ATP.

It belongs to the adenylate kinase family. In terms of assembly, monomer.

The protein resides in the cytoplasm. It catalyses the reaction AMP + ATP = 2 ADP. The protein operates within purine metabolism; AMP biosynthesis via salvage pathway; AMP from ADP: step 1/1. Its function is as follows. Catalyzes the reversible transfer of the terminal phosphate group between ATP and AMP. Plays an important role in cellular energy homeostasis and in adenine nucleotide metabolism. The chain is Adenylate kinase from Thermobifida fusca (strain YX).